Consider the following 612-residue polypeptide: Cytokine-like nuclear factor N-PAC (612 aa).

Positions 22–81 (PKDLIWAKMKGFTPWPGMIVEPPLDLLTQQRRANTKCVFFFGSRNFAWIEENNIKPFEGP) constitute a PWWP domain. The tract at residues 168-270 (AVEGENNADS…GASSSSPTAR (103 aa)) is disordered. Composition is skewed to low complexity over residues 177-193 (SSAS…TAKS) and 201-220 (AKPV…TTKS). Residues 228–240 (AHQTPTGANTSGL) are compositionally biased toward polar residues. The segment at 276–279 (DDLL) is interaction with histone H3. Residues 319–612 (RDIVPSELTF…SSAVFVRSRF (294 aa)) are dehydrogenase domain. NAD(+)-binding positions include 329–343 (GFLG…IVKD), Thr421, and Arg564.

This sequence belongs to the HIBADH-related family. NP60 subfamily. As to quaternary structure, binds to mononucleosomes. Interacts with male-specific lethal (MSL) histone acetyltransferase complex at least composed of mof, msl-1, msl-2 and msl-3.

The protein localises to the chromosome. Functionally, nucleosome-destabilizing factor that is recruited to genes during transcriptional activation and colocalizes with a subset of trimethylated 'Lys-36' histone H3 (H3K36me3)-enriched regions. Binds DNA (in vitro). Facilitates Pol II transcription through nucleosomes. Facilitates male-specific lethal (MSL) histone acetyltransferase complex targeting to active genes on the X chromosome. Stimulates the acetylation of 'Lys-56' of nucleosomal histone H3 (H3K56ac) by nej. In Drosophila pseudoobscura pseudoobscura (Fruit fly), this protein is Cytokine-like nuclear factor N-PAC.